Here is an 860-residue protein sequence, read N- to C-terminus: MADDGLGDVPMETESMPQYTISHVIEAHKSDTKALAVTQGGCLISGGRDETVKFWAKKGKQYTKTHAFEQPKGITVNSIAYAELADGWRLFVGRRDGTIAVFGPSQAEPYAIFNEHKQNVCCLHINEKATHMLSGSWDSNVIIWPITELNSSSFTFQTIVCPGHTLSVWALASFPDLPNTYLSASADKTIRMWFGDTTLSVFKGHTDVVRALVVLSSSHFLSAGNDGHIIHWDVASASILRKFATQAHEFIYSMTLSDSHILTTGEDGTLEFWAIDGGKDGNLAIVSEAVIQLPTTNTWDAKVLLNSDIAVAGSDGRIYIMTTDKNRKADDDILDAFDAEVVAKLTAKTERMKQEEHETVTIKVDIDDRPTQLNLKYKKGTDPGLCAQEFLSENNLPIHYLEEITRFIKDRIPEARAFDLKSGKKVIVDGKEYDYALGVNFGKGEPDKQMPFNVNESPQFAAQRFVERHQLPVSVIPSLAGMISQEMDKLSKGAASAQSGYEDPFTGPGRYVPQGSSNSGGHGADPFTGSGRYVPQASNSSGFDTGFSGDPLTGDGGYRASAPENTGSHAVPLSSLPQNKKKPRGPLVPVPDFYIIGLAGKGEKAIAKLKELNEKQDAFQLNPDQINGLEELFVLPTSSNYSSEVTQSAFEMSLQWPVEHLTPVLDFLRIALTHHSLNSYFCDRERGQELVGRLIAILVSDPADVALKVLVCRCIANAFSHPVGRNLFASTELSTLAPLVVRQVLNEKTVLQMSAATALANWSLALLQQSEQCEQLGPKEDLLRAILNGIESVDSFGYLGEDAIIRLLQALVTVMWGDASVIRLAKNRNIAQIAARLKDAVSNDSGKNIARDIVEMTYAV.

6 WD repeats span residues 27–65, 71–112, 115–154, 163–203, 204–242, and 244–283; these read AHKS…YTKT, PKGI…PYAI, EHKQ…SSSF, GHTL…SVFK, GHTD…ILRK, and ATQA…DGNL. Residues 397-497 form the PFU domain; the sequence is PIHYLEEITR…DKLSKGAASA (101 aa). Residues 494-585 form a disordered region; it reads AASAQSGYED…LPQNKKKPRG (92 aa). A PUL domain is found at 586–856; it reads PLVPVPDFYI…KNIARDIVEM (271 aa).

Belongs to the WD repeat PLAP family. As to quaternary structure, interacts with cdc-48.1. In terms of tissue distribution, expressed in intestine (at protein level).

The protein resides in the cytoplasm. Its function is as follows. Plays a role in protein ubiquitination, sorting and degradation through its association with cdc-48.1 and/or cdc-48.2. This is Ubiquitin fusion degradation protein 3 homolog from Caenorhabditis elegans.